The following is a 451-amino-acid chain: Heme sensor protein HssS (451 aa).

Helical transmembrane passes span Ile-9–Asn-29 and Ile-164–Ser-184. The HAMP domain maps to Tyr-186–Gln-238. The Histidine kinase domain occupies Asn-246 to Ile-451. The residue at position 249 (His-249) is a Phosphohistidine; by autocatalysis.

In terms of processing, autophosphorylated.

It is found in the cell membrane. The enzyme catalyses ATP + protein L-histidine = ADP + protein N-phospho-L-histidine.. In terms of biological role, member of the two-component regulatory system HssS/HssR involved in intracellular heme homeostasis and tempering of staphylococcal virulence. HssS functions as a heme sensor histidine kinase which is autophosphorylated at a histidine residue and transfers its phosphate group to an aspartate residue of HssR. HssR/HssS activates the expression of HrtAB, an efflux pump, in response to extracellular heme, hemin, hemoglobin or blood. The polypeptide is Heme sensor protein HssS (hssS) (Staphylococcus epidermidis (strain ATCC 35984 / DSM 28319 / BCRC 17069 / CCUG 31568 / BM 3577 / RP62A)).